The sequence spans 406 residues: Phosphopentomutase (406 aa).

6 residues coordinate Mn(2+): Asp10, Asp305, His310, Asp346, His347, and His358.

The protein belongs to the phosphopentomutase family. Requires Mn(2+) as cofactor.

The protein localises to the cytoplasm. The enzyme catalyses 2-deoxy-alpha-D-ribose 1-phosphate = 2-deoxy-D-ribose 5-phosphate. The catalysed reaction is alpha-D-ribose 1-phosphate = D-ribose 5-phosphate. Its pathway is carbohydrate degradation; 2-deoxy-D-ribose 1-phosphate degradation; D-glyceraldehyde 3-phosphate and acetaldehyde from 2-deoxy-alpha-D-ribose 1-phosphate: step 1/2. In terms of biological role, isomerase that catalyzes the conversion of deoxy-ribose 1-phosphate (dRib-1-P) and ribose 1-phosphate (Rib-1-P) to deoxy-ribose 5-phosphate (dRib-5-P) and ribose 5-phosphate (Rib-5-P), respectively. The protein is Phosphopentomutase of Vibrio cholerae serotype O1 (strain ATCC 39315 / El Tor Inaba N16961).